The chain runs to 621 residues: 1-deoxy-D-xylulose-5-phosphate synthase (621 aa).

Residues H80 and 121 to 123 each bind thiamine diphosphate; that span reads GHS. D152 is a Mg(2+) binding site. Residues 153-154, N181, Y288, and E370 contribute to the thiamine diphosphate site; that span reads GA. A Mg(2+)-binding site is contributed by N181.

It belongs to the transketolase family. DXPS subfamily. Homodimer. The cofactor is Mg(2+). Thiamine diphosphate serves as cofactor.

The catalysed reaction is D-glyceraldehyde 3-phosphate + pyruvate + H(+) = 1-deoxy-D-xylulose 5-phosphate + CO2. The protein operates within metabolic intermediate biosynthesis; 1-deoxy-D-xylulose 5-phosphate biosynthesis; 1-deoxy-D-xylulose 5-phosphate from D-glyceraldehyde 3-phosphate and pyruvate: step 1/1. Its function is as follows. Catalyzes the acyloin condensation reaction between C atoms 2 and 3 of pyruvate and glyceraldehyde 3-phosphate to yield 1-deoxy-D-xylulose-5-phosphate (DXP). The polypeptide is 1-deoxy-D-xylulose-5-phosphate synthase (Vibrio campbellii (strain ATCC BAA-1116)).